Consider the following 146-residue polypeptide: Multiple coagulation factor deficiency protein 2 (146 aa).

An N-terminal signal peptide occupies residues 1–26 (MTMRSLLRTPFLCGLLWAFCAPGARA). The EF-hand 1 domain maps to 68-103 (SPQELQLHYFKMHDYDGNNLLDGLELSTAITHVHKE). Positions 81, 83, 85, and 92 each coordinate Ca(2+). Residue Ser-106 is modified to Phosphoserine. An EF-hand 2 domain is found at 116-146 (ELINIIDGVLRDDDKNNDGYIDYAEFAKSLQ). Residues Asp-129, Asn-131, Asp-133, Tyr-135, and Glu-140 each contribute to the Ca(2+) site.

In terms of assembly, interacts in a calcium-dependent manner with LMAN1.

Its subcellular location is the endoplasmic reticulum-Golgi intermediate compartment. It is found in the endoplasmic reticulum. The protein resides in the golgi apparatus. In terms of biological role, the MCFD2-LMAN1 complex forms a specific cargo receptor for the ER-to-Golgi transport of selected proteins. Plays a role in the secretion of coagulation factors. This chain is Multiple coagulation factor deficiency protein 2 (MCFD2), found in Homo sapiens (Human).